Reading from the N-terminus, the 381-residue chain is Probable serine/threonine-protein kinase PBL22 (381 aa).

Cys-3 is lipidated: S-palmitoyl cysteine. Thr-64 bears the Phosphothreonine mark. The 277-residue stretch at 75 to 351 folds into the Protein kinase domain; that stretch reads FREGNIIGKG…GDVVVAFEYI (277 aa). ATP contacts are provided by residues 81 to 89 and Lys-103; that span reads IGKGGFGSV. At Tyr-148 the chain carries Phosphotyrosine. Asp-201 acts as the Proton acceptor in catalysis. Ser-235 is modified (phosphoserine). Phosphothreonine is present on residues Thr-236 and Thr-241. At Tyr-249 the chain carries Phosphotyrosine. Residues 361–381 are disordered; that stretch reads RRTARKSTDSNRLRRETKQSY.

It belongs to the protein kinase superfamily. Ser/Thr protein kinase family. Post-translationally, palmitoylation at Cys-3 and Cys-6 are required for plasma membrane location.

It is found in the cell membrane. It catalyses the reaction L-seryl-[protein] + ATP = O-phospho-L-seryl-[protein] + ADP + H(+). The enzyme catalyses L-threonyl-[protein] + ATP = O-phospho-L-threonyl-[protein] + ADP + H(+). Functionally, may be involved in plant defense signaling. The protein is Probable serine/threonine-protein kinase PBL22 of Arabidopsis thaliana (Mouse-ear cress).